The following is a 467-amino-acid chain: ATP synthase subunit beta (467 aa).

153–160 provides a ligand contact to ATP; that stretch reads GGAGVGKT.

Belongs to the ATPase alpha/beta chains family. F-type ATPases have 2 components, CF(1) - the catalytic core - and CF(0) - the membrane proton channel. CF(1) has five subunits: alpha(3), beta(3), gamma(1), delta(1), epsilon(1). CF(0) has three main subunits: a(1), b(2) and c(9-12). The alpha and beta chains form an alternating ring which encloses part of the gamma chain. CF(1) is attached to CF(0) by a central stalk formed by the gamma and epsilon chains, while a peripheral stalk is formed by the delta and b chains.

It localises to the cell membrane. The catalysed reaction is ATP + H2O + 4 H(+)(in) = ADP + phosphate + 5 H(+)(out). Functionally, produces ATP from ADP in the presence of a proton gradient across the membrane. The catalytic sites are hosted primarily by the beta subunits. This chain is ATP synthase subunit beta, found in Lactiplantibacillus plantarum (strain ATCC BAA-793 / NCIMB 8826 / WCFS1) (Lactobacillus plantarum).